We begin with the raw amino-acid sequence, 449 residues long: Putative F-box/LRR-repeat protein 23 (449 aa).

LRR repeat units lie at residues 14-37 and 39-64; these read KLWR…HLKL and GNGL…DLRR. The F-box domain occupies 178–225; it reads LRNWAELPSKLTSSILLRLGAIEILQNAQKVCKPWHRVCKDPSMWRKI. LRR repeat units follow at residues 261-286, 287-311, 312-337, 344-367, 369-394, and 401-427; these read WYYG…GLVR, CFPI…LEVS, YCLF…KLNR, SNSG…HLQL, GNGL…DLRQ, and VGDL…DSDD.

The polypeptide is Putative F-box/LRR-repeat protein 23 (FBL23) (Arabidopsis thaliana (Mouse-ear cress)).